We begin with the raw amino-acid sequence, 383 residues long: Succinyl-diaminopimelate desuccinylase (383 aa).

Position 69 (H69) interacts with Zn(2+). D71 is a catalytic residue. Zn(2+) is bound at residue D103. E137 serves as the catalytic Proton acceptor. Positions 138, 166, and 357 each coordinate Zn(2+).

It belongs to the peptidase M20A family. DapE subfamily. As to quaternary structure, homodimer. The cofactor is Zn(2+). It depends on Co(2+) as a cofactor.

It carries out the reaction N-succinyl-(2S,6S)-2,6-diaminopimelate + H2O = (2S,6S)-2,6-diaminopimelate + succinate. It participates in amino-acid biosynthesis; L-lysine biosynthesis via DAP pathway; LL-2,6-diaminopimelate from (S)-tetrahydrodipicolinate (succinylase route): step 3/3. Its function is as follows. Catalyzes the hydrolysis of N-succinyl-L,L-diaminopimelic acid (SDAP), forming succinate and LL-2,6-diaminopimelate (DAP), an intermediate involved in the bacterial biosynthesis of lysine and meso-diaminopimelic acid, an essential component of bacterial cell walls. In Rickettsia prowazekii (strain Madrid E), this protein is Succinyl-diaminopimelate desuccinylase.